A 362-amino-acid chain; its full sequence is 3-dehydroquinate synthase (362 aa).

NAD(+) is bound by residues 71 to 76 (DGEQYK), 105 to 109 (GVIGD), 129 to 130 (TT), K142, K151, and 169 to 172 (CLKT). Residues E184, H247, and H264 each coordinate Zn(2+).

Belongs to the sugar phosphate cyclases superfamily. Dehydroquinate synthase family. Co(2+) serves as cofactor. Zn(2+) is required as a cofactor. It depends on NAD(+) as a cofactor.

The protein localises to the cytoplasm. The catalysed reaction is 7-phospho-2-dehydro-3-deoxy-D-arabino-heptonate = 3-dehydroquinate + phosphate. It participates in metabolic intermediate biosynthesis; chorismate biosynthesis; chorismate from D-erythrose 4-phosphate and phosphoenolpyruvate: step 2/7. Functionally, catalyzes the conversion of 3-deoxy-D-arabino-heptulosonate 7-phosphate (DAHP) to dehydroquinate (DHQ). This Salmonella enteritidis PT4 (strain P125109) protein is 3-dehydroquinate synthase.